Reading from the N-terminus, the 298-residue chain is Calcium-binding protein 1 (298 aa).

Residues 1–10 (MSSHIAKSES) show a composition bias toward basic and acidic residues. The tract at residues 1–131 (MSSHIAKSES…APAGTPEADP (131 aa)) is disordered. A lipid anchor (N-myristoyl glycine) is attached at Ser2. The S-palmitoyl cysteine moiety is linked to residue His4. The segment covering 11–25 (KTSLLKAAAASGGSR) has biased composition (low complexity). 4 EF-hand domains span residues 153–188 (EEIE…MGYM), 207–224 (GHVD…KLLA), 230–265 (IGVK…LLGH), and 267–298 (VGHR…MMSR). 5 residues coordinate Ca(2+): Asp166, Asp168, Asp170, Tyr172, and Asp177. Ca(2+)-binding residues include Asp243, Asn245, Asp247, and Glu249. Ser251 bears the Phosphoserine mark. Residues Glu254, Asp280, Asn282, Asp284, Arg286, and Glu291 each contribute to the Ca(2+) site.

Interacts with ITPR1, ITPR2 and ITPR3. The strength of this interaction inversely correlates with calcium concentration. Interacts with CACNA1A (via C-terminal CDB motif) in the pre- and postsynaptic membranes. Interacts with CACNA1C. Interacts with CACNA1D. Interacts (via EF-hands 1 and 2) at microtubules with MAP1LC3B. Interacts (via EF-hands 1 and 2) with NSMF (via the central NLS-containing motif region), the interaction occurs in a calcium dependent manner after synaptic NMDA receptor stimulation and prevents nuclear import of NSMF. Interacts with MYO1C and TRPC5. Interacts with SPACA9. Post-translationally, phosphorylated. The phosphorylation regulates the activity. In terms of tissue distribution, somatodendritic compartment of neurons. Restricted expression in retina to a subpopulation of amacrine, bipolar, and ganglion cells. According to PubMed:11906216, expression is heterogeneous within brain regions and their major cell types and does not match with those of marker proteins for characterized neuronal subpopulations. Isoform 2: Minor isoform expressed in the brain, in the granule cell layer of the cerebellum, at low level. Not developmentally regulated. Isoform 3: Minor isoform expressed in the brain, in the granule cell layer. of the cerebellum, at low level. Not developmentally regulated.

The protein localises to the cytoplasm. It is found in the cytoskeleton. Functionally, modulates calcium-dependent activity of inositol 1,4,5-triphosphate receptors (ITPRs). Inhibits agonist-induced intracellular calcium signaling. Enhances inactivation and does not support calcium-dependent facilitation of voltage-dependent P/Q-type calcium channels. Causes calcium-dependent facilitation and inhibits inactivation of L-type calcium channels by binding to the same sites as calmodulin in the C-terminal domain of CACNA1C, but has an opposite effect on channel function. Suppresses the calcium-dependent inactivation of CACNA1D. Inhibits TRPC5 channels. Prevents NMDA receptor-induced cellular degeneration. Required for the normal transfer of light signals through the retina. The polypeptide is Calcium-binding protein 1 (Cabp1) (Rattus norvegicus (Rat)).